The following is a 328-amino-acid chain: Cytochrome f (328 aa).

An N-terminal signal peptide occupies residues Met1–Ala44. 4 residues coordinate heme: Tyr45, Cys66, Cys69, and His70. The helical transmembrane segment at Ile294–Lys314 threads the bilayer.

It belongs to the cytochrome f family. As to quaternary structure, the 4 large subunits of the cytochrome b6-f complex are cytochrome b6, subunit IV (17 kDa polypeptide, PetD), cytochrome f and the Rieske protein, while the 4 small subunits are PetG, PetL, PetM and PetN. The complex functions as a dimer. Requires heme as cofactor.

The protein localises to the cellular thylakoid membrane. Component of the cytochrome b6-f complex, which mediates electron transfer between photosystem II (PSII) and photosystem I (PSI), cyclic electron flow around PSI, and state transitions. The chain is Cytochrome f from Rippkaea orientalis (strain PCC 8801 / RF-1) (Cyanothece sp. (strain PCC 8801)).